The chain runs to 208 residues: Uracil phosphoribosyltransferase (208 aa).

5-phospho-alpha-D-ribose 1-diphosphate is bound by residues R78, R103, and 130 to 138 (DPMLATGGS). Uracil contacts are provided by residues I193 and 198 to 200 (GDA). Residue D199 participates in 5-phospho-alpha-D-ribose 1-diphosphate binding.

The protein belongs to the UPRTase family. Mg(2+) serves as cofactor.

It catalyses the reaction UMP + diphosphate = 5-phospho-alpha-D-ribose 1-diphosphate + uracil. It participates in pyrimidine metabolism; UMP biosynthesis via salvage pathway; UMP from uracil: step 1/1. Its activity is regulated as follows. Allosterically activated by GTP. In terms of biological role, catalyzes the conversion of uracil and 5-phospho-alpha-D-ribose 1-diphosphate (PRPP) to UMP and diphosphate. The sequence is that of Uracil phosphoribosyltransferase from Roseiflexus castenholzii (strain DSM 13941 / HLO8).